The sequence spans 368 residues: Agmatine deiminase (368 aa).

Residue C357 is the Amidino-cysteine intermediate of the active site.

This sequence belongs to the agmatine deiminase family. Homodimer.

The enzyme catalyses agmatine + H2O = N-carbamoylputrescine + NH4(+). The protein operates within amine and polyamine biosynthesis; putrescine biosynthesis via agmatine pathway; N-carbamoylputrescine from agmatine: step 1/1. Mediates the hydrolysis of agmatine into N-carbamoylputrescine in the arginine decarboxylase (ADC) pathway of putrescine biosynthesis, a basic polyamine. The chain is Agmatine deiminase from Pseudomonas aeruginosa (strain UCBPP-PA14).